The sequence spans 127 residues: Large ribosomal subunit protein bL20 (127 aa).

It belongs to the bacterial ribosomal protein bL20 family.

In terms of biological role, binds directly to 23S ribosomal RNA and is necessary for the in vitro assembly process of the 50S ribosomal subunit. It is not involved in the protein synthesizing functions of that subunit. The protein is Large ribosomal subunit protein bL20 of Opitutus terrae (strain DSM 11246 / JCM 15787 / PB90-1).